A 322-amino-acid chain; its full sequence is MKRSIIAGVGAYLPSTVVSNDELAKRVDTSDAWIRERTGIEQRYLATADESCAFMAARAAERALAHAGMTADDVDAILVATSTPDQVFPAVAVRVQALLGAKRGFGFDLSAACSGFVYGLSMGDALIRSGQAKGVLVIGAEVFSRLLDWDDRRTNVLFGDGAGAAFLRASTDNDDPARGILSTHLHSEGEFGDILFIDGANGVAGHPGTIVMNGREVFRHAVGKMAQAVEEAMAANDLTPADIDWLVPHQANLRIIEAMGKKLDLPPEKVVVTVNRHANTSAASIPLALNEAVQDGRIQPGSVVLMEALGGGLTWGSAILRM.

Active-site residues include Cys113 and His249. Residues 250-254 form an ACP-binding region; sequence QANLR. Asn279 is a catalytic residue.

Belongs to the thiolase-like superfamily. FabH family. As to quaternary structure, homodimer.

The protein localises to the cytoplasm. It carries out the reaction malonyl-[ACP] + acetyl-CoA + H(+) = 3-oxobutanoyl-[ACP] + CO2 + CoA. It participates in lipid metabolism; fatty acid biosynthesis. In terms of biological role, catalyzes the condensation reaction of fatty acid synthesis by the addition to an acyl acceptor of two carbons from malonyl-ACP. Catalyzes the first condensation reaction which initiates fatty acid synthesis and may therefore play a role in governing the total rate of fatty acid production. Possesses both acetoacetyl-ACP synthase and acetyl transacylase activities. Its substrate specificity determines the biosynthesis of branched-chain and/or straight-chain of fatty acids. The chain is Beta-ketoacyl-[acyl-carrier-protein] synthase III from Granulibacter bethesdensis (strain ATCC BAA-1260 / CGDNIH1).